The following is a 286-amino-acid chain: MIINHNMSAMFAQRTLGNTNLSVQKNMEKLSSGLRINRAGDDASGLAVSEKMRSQIRGLNQASTNAQNGISFIQVAESYLQETTDVIQRIRELSVQSANGIYSAEDRMYIQVEVSQLVAEIDRIASHAQFNGMNMLTGRFARETGENTVTASMWFHIGANMDQRTRAYIGTMTAAALGVRDVGDESILNIDDPEKANRAIGTLDEAIKKINKQRADLGAYQNRLEYTVIGVNVAAENLQAAESRIRDVDMAKEMVDYTKNQILVQSGTAMLAQANQATQSVLSLLR.

Belongs to the bacterial flagellin family. As to quaternary structure, the flagellum consists of an outer layer composed of repeating units of FlaA around a core that contains several antigenically related polypeptides.

The protein localises to the periplasmic flagellum. The protein resides in the periplasm. Functionally, component of the core of the flagella. The polypeptide is Flagellar filament 33 kDa core protein (Treponema phagedenis).